The following is a 110-amino-acid chain: Protein OPG154 (110 aa).

This sequence belongs to the orthopoxvirus OPG154 protein family. As to quaternary structure, homohexamers, covalently linked. Interacts with OPG144 and OPG153.

It localises to the virion. Functionally, structural protein involved in the envelopment of mature virion (MV) to form the wrapped virion (WV). The wrapping consists of the addition of Golgi membranes to the mature virion. Participates in mature virion (MV) movement within the infected cell. May play an indirect role in MV-cell fusion. The chain is Protein OPG154 (OPG154) from Homo sapiens (Human).